A 393-amino-acid chain; its full sequence is Probable acetyl-CoA acyltransferase (393 aa).

Catalysis depends on C88, which acts as the Acyl-thioester intermediate. Active-site proton acceptor residues include H349 and C378.

Belongs to the thiolase-like superfamily. Thiolase family.

It localises to the cytoplasm. The catalysed reaction is 2 acetyl-CoA = acetoacetyl-CoA + CoA. The sequence is that of Probable acetyl-CoA acyltransferase from Staphylococcus aureus (strain MSSA476).